A 47-amino-acid chain; its full sequence is Large ribosomal subunit protein bL34 (47 aa).

The protein belongs to the bacterial ribosomal protein bL34 family.

This chain is Large ribosomal subunit protein bL34, found in Nocardia farcinica (strain IFM 10152).